Reading from the N-terminus, the 447-residue chain is Glucose-6-phosphate isomerase (447 aa).

The Proton donor role is filled by glutamate 289. Catalysis depends on residues histidine 310 and lysine 424.

This sequence belongs to the GPI family.

It is found in the cytoplasm. It catalyses the reaction alpha-D-glucose 6-phosphate = beta-D-fructose 6-phosphate. Its pathway is carbohydrate biosynthesis; gluconeogenesis. It functions in the pathway carbohydrate degradation; glycolysis; D-glyceraldehyde 3-phosphate and glycerone phosphate from D-glucose: step 2/4. Functionally, catalyzes the reversible isomerization of glucose-6-phosphate to fructose-6-phosphate. The sequence is that of Glucose-6-phosphate isomerase from Parabacteroides distasonis (strain ATCC 8503 / DSM 20701 / CIP 104284 / JCM 5825 / NCTC 11152).